The primary structure comprises 263 residues: 7beta-hydroxysteroid dehydrogenase (263 aa).

NADP(+)-binding positions include 17-21, 40-41, and 66-67; these read TEGVG, RR, and DF. Residue Y156 is the Proton acceptor of the active site. S240 lines the NADP(+) pocket.

Belongs to the short-chain dehydrogenases/reductases (SDR) family.

The enzyme catalyses a 7beta-hydroxysteroid + NADP(+) = a 7-oxosteroid + NADPH + H(+). The catalysed reaction is 7-oxolithocholate + NADPH + H(+) = ursodeoxycholate + NADP(+). In terms of biological role, 7beta-hydroxysteroid dehydrogenase that catalyzes the reduction of the 7-oxo group of 7-oxo-lithocholate (7-oxo-LCA), to yield ursodeoxycholate (UDCA). As R.gnavus is a common core bacterium of the human gut microbiota, this enzyme contributes to the formation of UDCA in the human colon. UDCA is regarded as a chemopreventive beneficial secondary bile acid due to its low hydrophobicity; it protects hepatocytes and bile duct epithelial cells against necrosis and apoptosis induced by more hydrophobic secondary bile acids like deoxycholate (DCA). This enzyme is also able to catalyze the reverse reaction in vitro, i.e. the oxidation of the 7beta-hydroxy group of UDCA to 7-oxo-LCA, but much less efficiently than the reduction reaction. This is 7beta-hydroxysteroid dehydrogenase from Mediterraneibacter gnavus (strain ATCC 29149 / DSM 114966 / JCM 6515 / VPI C7-9) (Ruminococcus gnavus).